The primary structure comprises 257 residues: AN1-type zinc finger protein 2B (257 aa).

2 AN1-type zinc fingers span residues 4–52 and 94–142; these read PDLG…QKDI and KIFT…HPTS. Zn(2+) is bound by residues Cys10, Cys15, Cys25, Cys28, Cys33, His36, His42, Cys44, Cys100, Cys105, Cys115, Cys118, Cys123, His126, His132, and Cys134. The segment at 141–151 is VCP/p97-interacting motif (VIM); it reads TSRAGLAAISR. A disordered region spans residues 153–187; that stretch reads QAVASTSTVPSPSQTMPSCTSPSRATTRSPSWTAP. The span at 155 to 171 shows a compositional bias: polar residues; that stretch reads VASTSTVPSPSQTMPSC. 2 positions are modified to phosphoserine: Ser163 and Ser173. Residues 172–186 show a composition bias toward low complexity; it reads TSPSRATTRSPSWTA. UIM domains are found at residues 197–216 and 221–240; these read SEDE…TKPQ and QEEE…AEYQ. Cysteine methyl ester is present on Cys254. Cys254 carries S-geranylgeranyl cysteine lipidation. The CAAX motif signature appears at 254–257; the sequence is CSLC. The propeptide at 255–257 is removed in mature form; it reads SLC.

Binds 'Lys-48'-linked polyubiquitin chains of ubiquitinated proteins. Associates with the proteasome complex; upon exposure to arsenite. Interacts (via VIM motif) with VCP; the interaction is direct. Interacts with BAG6. Interacts with IGF1R (nascent precursor form). Interacts with DERL1, FAF2, NPLOC4 and UFD1; probably through VCP. Post-translationally, phosphorylated by MAPK14. Phosphorylation has no effect on association with the proteasome complex.

The protein resides in the endoplasmic reticulum membrane. Plays a role in protein homeostasis by regulating both the translocation and the ubiquitin-mediated proteasomal degradation of nascent proteins at the endoplasmic reticulum. It is involved in the regulation of signal-mediated translocation of proteins into the endoplasmic reticulum. It also plays a role in the ubiquitin-mediated proteasomal degradation of proteins for which signal-mediated translocation to the endoplasmic reticulum has failed. May therefore function in the endoplasmic reticulum stress-induced pre-emptive quality control, a mechanism that selectively attenuates the translocation of newly synthesized proteins into the endoplasmic reticulum and reroutes them to the cytosol for proteasomal degradation. By controlling the steady-state expression of the IGF1R receptor, indirectly regulates the insulin-like growth factor receptor signaling pathway. The chain is AN1-type zinc finger protein 2B from Homo sapiens (Human).